We begin with the raw amino-acid sequence, 274 residues long: Diaminopimelate epimerase (274 aa).

Asn11, Gln44, and Asn64 together coordinate substrate. Cys73 serves as the catalytic Proton donor. Substrate contacts are provided by residues 74–75, Asn157, Asn190, and 208–209; these read GN and ER. Catalysis depends on Cys217, which acts as the Proton acceptor. 218–219 is a binding site for substrate; that stretch reads GS.

It belongs to the diaminopimelate epimerase family. As to quaternary structure, homodimer (Potential). Previously DapF has been proposed to be a monomer, however it seems that it adopts a dimeric structure.

Its subcellular location is the cytoplasm. It catalyses the reaction (2S,6S)-2,6-diaminopimelate = meso-2,6-diaminopimelate. It functions in the pathway amino-acid biosynthesis; L-lysine biosynthesis via DAP pathway; DL-2,6-diaminopimelate from LL-2,6-diaminopimelate: step 1/1. Its activity is regulated as follows. Inhibited by LL-aziridino (LL-AziDAP), DL-aziridino (DL-AziDAP). Also inhibited by (2S,3R,6S)-2,6-diamino-3-fluoropimelate (L,L-3-fluoro-DAP) and (2R,3S,6S)-2,6-diamino-3-fluoropimelate (D,L-3-fluoro-DAP). Its function is as follows. Catalyzes the stereoinversion of LL-2,6-diaminopimelate (L,L-DAP) to meso-diaminopimelate (meso-DAP), a precursor of L-lysine and an essential component of the bacterial peptidoglycan. Only accepts DAP isomers with the L configuration. The sequence is that of Diaminopimelate epimerase from Haemophilus influenzae (strain ATCC 51907 / DSM 11121 / KW20 / Rd).